Consider the following 266-residue polypeptide: Signal peptidase I (266 aa).

Residues 1–20 are Cytoplasmic-facing; the sequence is MQTDNTKSNTNKTAKQEWGS. Residues 21–41 form a helical membrane-spanning segment; the sequence is FAFVICIALLIRILIMEPFTV. Over 42-266 the chain is Periplasmic; sequence PTGSMKATIL…IFRNLYSTDE (225 aa). Residues serine 45 and lysine 108 contribute to the active site.

The protein belongs to the peptidase S26 family.

Its subcellular location is the cell inner membrane. It catalyses the reaction Cleavage of hydrophobic, N-terminal signal or leader sequences from secreted and periplasmic proteins.. In Rickettsia felis (strain ATCC VR-1525 / URRWXCal2) (Rickettsia azadi), this protein is Signal peptidase I (lepB).